We begin with the raw amino-acid sequence, 464 residues long: DNA primase DnaG (464 aa).

Positions 198-272 (DSIIVVEGRA…DVDYVARAPE (75 aa)) constitute a Toprim domain. Residues E204, D246, and D248 each contribute to the Mg(2+) site. Over residues 315–333 (RESEGERQPRQVTKPEPEV) the composition is skewed to basic and acidic residues. Positions 315-351 (RESEGERQPRQVTKPEPEVVKAQPKAETPEEKREPAT) are disordered.

Belongs to the archaeal DnaG primase family. As to quaternary structure, forms a ternary complex with MCM helicase and DNA. Component of the archaeal exosome complex. Mg(2+) is required as a cofactor.

It carries out the reaction ssDNA + n NTP = ssDNA/pppN(pN)n-1 hybrid + (n-1) diphosphate.. Functionally, RNA polymerase that catalyzes the synthesis of short RNA molecules used as primers for DNA polymerase during DNA replication. Also part of the exosome, which is a complex involved in RNA degradation. Acts as a poly(A)-binding protein that enhances the interaction between heteromeric, adenine-rich transcripts and the exosome. This chain is DNA primase DnaG, found in Thermococcus kodakarensis (strain ATCC BAA-918 / JCM 12380 / KOD1) (Pyrococcus kodakaraensis (strain KOD1)).